We begin with the raw amino-acid sequence, 246 residues long: Triosephosphate isomerase (246 aa).

9 to 11 (NWK) contacts substrate. His91 (electrophile) is an active-site residue. Catalysis depends on Glu161, which acts as the Proton acceptor. Substrate contacts are provided by residues Gly167, Ser206, and 227–228 (GG).

This sequence belongs to the triosephosphate isomerase family. In terms of assembly, homodimer.

It is found in the cytoplasm. It carries out the reaction D-glyceraldehyde 3-phosphate = dihydroxyacetone phosphate. Its pathway is carbohydrate biosynthesis; gluconeogenesis. It functions in the pathway carbohydrate degradation; glycolysis; D-glyceraldehyde 3-phosphate from glycerone phosphate: step 1/1. Functionally, involved in the gluconeogenesis. Catalyzes stereospecifically the conversion of dihydroxyacetone phosphate (DHAP) to D-glyceraldehyde-3-phosphate (G3P). The chain is Triosephosphate isomerase from Ruegeria sp. (strain TM1040) (Silicibacter sp.).